Consider the following 391-residue polypeptide: Nucleosome assembly protein 1-like 1 (391 aa).

A compositionally biased stretch (basic and acidic residues) spans 1–10 (MADIDNKEQS). The disordered stretch occupies residues 1–32 (MADIDNKEQSELDQDLDDVEEVEEEETGEETK). Ala-2 carries the N-acetylalanine modification. Ser-10 carries the phosphoserine modification. Over residues 11–28 (ELDQDLDDVEEVEEEETG) the composition is skewed to acidic residues. Thr-62 and Thr-64 each carry phosphothreonine. The residue at position 69 (Ser-69) is a Phosphoserine. Position 116 is an N6-acetyllysine (Lys-116). Residues 125–150 (YEPTEEECEWKPDEEDEISEELKEKA) carry the NAP1L motif motif. Over residues 132 to 143 (CEWKPDEEDEIS) the composition is skewed to acidic residues. Residues 132–163 (CEWKPDEEDEISEELKEKAKIEDEKKDEEKED) are disordered. Ser-143 carries the phosphoserine modification. The span at 144–163 (EELKEKAKIEDEKKDEEKED) shows a compositional bias: basic and acidic residues. A Nuclear localization signal motif is present at residues 273–279 (IKKKQKH). Acidic residues predominate over residues 346-376 (AIEDDDDDYDEEGEEADEEGEEEGDEENDPD). The segment at 346–391 (AIEDDDDDYDEEGEEADEEGEEEGDEENDPDYDPKKDQNPAECKQQ) is disordered. 5-glutamyl polyglycine is present on residues Glu-359 and Glu-360. Basic and acidic residues predominate over residues 377–391 (YDPKKDQNPAECKQQ). Cys-388 carries the cysteine methyl ester modification. Residue Cys-388 is the site of S-farnesyl cysteine attachment. Positions 389–391 (KQQ) are cleaved as a propeptide — removed in mature form.

Belongs to the nucleosome assembly protein (NAP) family. In terms of assembly, homodimer. The dimer binds strongly and sequentially to single and double H2A-H2B heterodimers. Interacts with ERCC6; this interaction increases ERCC6 processivity. Interacts with RAD54. Interacts with SETD1A. Polyglycylated by TTLL10 on glutamate residues, resulting in polyglycine chains on the gamma-carboxyl group. Both polyglutamylation and polyglycylation modifications can coexist on the same protein on adjacent residues, and lowering polyglycylation levels increases polyglutamylation, and reciprocally. Post-translationally, polyglutamylated by TTLL4 on glutamate residues, resulting in polyglutamate chains on the gamma-carboxyl group. Both polyglutamylation and polyglycylation modifications can coexist on the same protein on adjacent residues, and lowering polyglycylation levels increases polyglutamylation, and reciprocally.

The protein localises to the nucleus. The protein resides in the melanosome. Its subcellular location is the cytoplasm. Its function is as follows. Histone chaperone that plays a role in the nuclear import of H2A-H2B and nucleosome assembly. Also participates in several important DNA repair mechanisms: greatly enhances ERCC6-mediated chromatin remodeling which is essential for transcription-coupled nucleotide excision DNA repair. Also stimulates homologous recombination (HR) by RAD51 and RAD54 which is essential in mitotic DNA double strand break (DSB) repair. Plays a key role in the regulation of embryonic neurogenesis. Promotes the proliferation of neural progenitors and inhibits neuronal differentiation during cortical development. Regulates neurogenesis via the modulation of RASSF10; regulates RASSF10 expression by promoting SETD1A-mediated H3K4 methylation at the RASSF10 promoter. This is Nucleosome assembly protein 1-like 1 (NAP1L1) from Pongo abelii (Sumatran orangutan).